The primary structure comprises 1663 residues: MLADMCVGVYKAAMNYEIRPHEFSFNTQESLFTGLGLGFLAATAVVASPSLLDLPITAAEVVRIAMRAGILLYQKSQDLEQLSLDSSLESWTTVVRGLDESIVRGELEKFNKSMETPPSSRIYISVVEPDGSVFISGPPSGLREFFNKSGKVQSAPRAPLPVYGGPCHAAHLYDRTHTEWVVSKVNPEIASRRLSGHPLVLSMGDGQPLAGENARDLFESATYVLLTSIIRWDSVLAAVKKLPHWKQDTKLQLETFRPSSPAVHGLISAVQSEYPDCTVSVDDLGDWIIDNSLEPPTIPIDSRIAVVGMSCRLPGGSDDLQRFWELLEDGRDVHQKVPGNRYDVESHTDMTGRRLNTSHTPFGCFIDSPGLFDASFFDMSPREAGQTDPTHRLALLTAYEALEYSGYVPNRTRSTTRDRVGTVYGQCSDDYREANAGQNIDMYFIPGNYRAFAPGRISYFFKFSGPSFNCDTACSASLAAVQIACSALIRGEADMVVAGGLNILTGSDSFAGLSRGFFLSKTGNCKVFDDGADGYCRADGIGSIVLKRLSDAQQDNDNILGVILGTATNHSSHAISITHPHAPTQEHLYRSVLSQAGIGPHDVDLVEMHGTGTQAGDAAEIESVTRVFSPPVPRRSHPLYISSVKANLGHGEAAAGITALMKALLIFQHNAIPRHVGIKTALNSKFPDLERLNVHIPKETIPWPYRSNRKRYVMINNFSAAGGNTSLLLEEPPVRPDPQGPPQTRFVVALSAKSTTSLRRNLESLITWLEGNRSARLASLAYTTTARRMHHKHRIAVHGASVAEIIQALHQRGSRAELGLLVSKPPSVAFIFSGQGSFYAGVGSQLFKEYPPYREQLQRLDEICQQNGFGSILPAITDTDADVSQLSALVTQLTTVCVQIALCRLWRTLGVKPAVVIGASLGEYAALYAAGALSASDAIFLVGQRTLLMQKLCTANSYGMLAVQGSVDDIRRCVQDRTYEVACINAPRSITICASIKDIVDIQQSLVSQGYRSVKLNVPFAFHSSQMDPILDRYEEIAKAVSFRSLQIPLISSTLADAAVQSRSLVASLFLRENTRAPARFAEAVAKAQDMGLVNSHTVWVEIGVHSTYSGAVRATVADLQAIVPSLRSDETNWHTLAVSMCTLQETGVPLDWNEWYRPFEPEVRLLDLPSYRWDLKNHWIQYNGDWLLVKDKRPRTDQISAATPSLRTALVHQIMEESFRPDGGEIVVQSDVMDKEFFAVASGHKMSGRPLVSVFSYPDIAFTLARYMYSRLKPESPLPAMDFGQVRVLQGLLPRKDRSKPQWVRMRMRADPQCAALQLSISGLSDESSRHVEEKLASGVVRCGDRQSWQDEWADYAHLLTTRIVTLQQMAENGQASRVSRDLVYTLFKNIVDYADHYRGIQSAVLHGLEAVADVILAPSNDSRWTAPPHHIDPITHVGGLVLNAGHATDHHNTIYVMEGWKSMRFAEELVAGELYRSYVKMNPARDGSGFFVGDVYVMREDHIVGKVRGMTLRPLPRILMNRFFDPPDDGDGLATQHIQPHDLPQVQHQPSPTTDSGPDDDPKDPNTGPLTPEVDLPVAPSVEKANTKLVRGALALLAAETGVEPDGLTDETEVSALGIDSLLSLVLVEKFATELQVNIQSSFFLESPTIRELKEYLTASW.

Residues Arg19–His168 form an N-terminal acylcarrier protein transacylase domain (SAT) region. Positions Asp301–Glu731 constitute a Ketosynthase family 3 (KS3) domain. Residues Cys474, His609, and His650 each act as for beta-ketoacyl synthase activity in the active site. The interval Phe830–Val1149 is malonyl-CoA:ACP transacylase (MAT) domain. A product template (PT) domain region spans residues Thr1209 to Asp1527. The interval His1213 to Ser1349 is N-terminal hotdog fold. The region spanning His1213–Asn1523 is the PKS/mFAS DH domain. Catalysis depends on His1245, which acts as the Proton acceptor; for dehydratase activity. The tract at residues Gln1376–Asn1523 is C-terminal hotdog fold. Residue Asp1434 is the Proton donor; for dehydratase activity of the active site. The tract at residues Asp1544–Val1580 is disordered. One can recognise a Carrier domain in the interval Lys1586–Trp1663. O-(pantetheine 4'-phosphoryl)serine is present on Ser1623.

Requires pantetheine 4'-phosphate as cofactor.

It participates in secondary metabolite biosynthesis. Its function is as follows. Non-reducing polyketide synthase; part of the gene cluster that mediates the biosynthesis of the bicoumarin kotanin. The non-reducing polyketide synthase ktnS first catalyzes the formation of the pentaketidic 4,7-dihydroxy-5-methylcoumarin from acetyl coenzyme A and 4 malonyl coenzyme A molecules. Further O-methylation by ktnB leads to the formation of 7-demethylsiderin. Then, an oxidative phenol coupling catalyzed by the cytochrome P450 monooxygenase ktnC forms the 8,8'-dimer P-orlandin via dimerization the monomeric precursor, 7-demethylsiderin. P-orlandin is subsequently O-methylated in a stepwise fashion to demethylkotanin and kotanin. This Aspergillus niger (strain ATCC MYA-4892 / CBS 513.88 / FGSC A1513) protein is Kotanin synthase.